A 416-amino-acid chain; its full sequence is Adipocyte plasma membrane-associated protein (416 aa).

The Cytoplasmic portion of the chain corresponds to 1-39 (MNEPEGLRFRRLNRPQIITDELQEPQYKGTSTYSGKVFR). A helical membrane pass occupies residues 40–60 (VILVTLGGCLILPLLVVFFLL). Residues 61–412 (ESPIHPELLS…FRSPYLCKLD (352 aa)) are Extracellular-facing. Residue Asn160 is glycosylated (N-linked (GlcNAc...) asparagine).

Belongs to the strictosidine synthase family.

Its subcellular location is the membrane. In Salmo salar (Atlantic salmon), this protein is Adipocyte plasma membrane-associated protein (apmap).